A 176-amino-acid chain; its full sequence is Dual-action ribosomal maturation protein DarP (176 aa).

This sequence belongs to the DarP family.

The protein localises to the cytoplasm. In terms of biological role, member of a network of 50S ribosomal subunit biogenesis factors which assembles along the 30S-50S interface, preventing incorrect 23S rRNA structures from forming. Promotes peptidyl transferase center (PTC) maturation. This Haemophilus ducreyi (strain 35000HP / ATCC 700724) protein is Dual-action ribosomal maturation protein DarP.